The following is a 242-amino-acid chain: Cysteine desulfuration protein SufE (242 aa).

The active-site Cysteine persulfide intermediate is the Cys-148.

This sequence belongs to the SufE family. Monomer. Interacts with SufS; interaction enhances cysteine desulfurase activity of SufS.

It is found in the plastid. The protein resides in the apicoplast. The protein operates within cofactor biosynthesis; iron-sulfur cluster biosynthesis. Functionally, participates in sulfur mobilization (SUF) pathway for iron-sulfur (Fe-S) cluster biogenesis. Enhances cysteine desulfurase activity of SufS. Probably functions as a sulfur acceptor for SufS. The protein is Cysteine desulfuration protein SufE of Plasmodium vivax.